A 275-amino-acid chain; its full sequence is MAALDGLPPLRDVIQRHGLDARKALGQNFLLDLNLTQKVARTAGGLEGMTVFEVGPGPGGLTRAILALGAKKVIAVERDARCLPALAEIADHYPGRLEVIEGDALKADFESLAPEGAVKIIANLPYNVGTQLLVNWLLPKAWPPFWQSLTLMFQKEVGERIVATEDDDHYGRLGVLCGWRTEARMAFDVPPQAFTPPPKVTSTVVHLTPRKNPIPCSVANLEKVTQAAFGQRRKMLRQSLKPLGGESLLVKAGIDPARRAETLSVEEFCLLANSL.

S-adenosyl-L-methionine-binding residues include N28, L30, G55, E77, D103, and N123.

Belongs to the class I-like SAM-binding methyltransferase superfamily. rRNA adenine N(6)-methyltransferase family. RsmA subfamily.

The protein resides in the cytoplasm. The catalysed reaction is adenosine(1518)/adenosine(1519) in 16S rRNA + 4 S-adenosyl-L-methionine = N(6)-dimethyladenosine(1518)/N(6)-dimethyladenosine(1519) in 16S rRNA + 4 S-adenosyl-L-homocysteine + 4 H(+). In terms of biological role, specifically dimethylates two adjacent adenosines (A1518 and A1519) in the loop of a conserved hairpin near the 3'-end of 16S rRNA in the 30S particle. May play a critical role in biogenesis of 30S subunits. The polypeptide is Ribosomal RNA small subunit methyltransferase A (Rhizobium etli (strain CIAT 652)).